Consider the following 92-residue polypeptide: Small ribosomal subunit protein bS20 (92 aa).

The segment at 1 to 28 (MANTASAEKRNRQAQKRRARNVQVRTGV) is disordered.

Belongs to the bacterial ribosomal protein bS20 family.

In terms of biological role, binds directly to 16S ribosomal RNA. This Anaeromyxobacter dehalogenans (strain 2CP-C) protein is Small ribosomal subunit protein bS20.